Reading from the N-terminus, the 276-residue chain is Polyamine aminopropyltransferase (276 aa).

In terms of domain architecture, PABS spans 3 to 236 (ELWYTEKQTK…GLWTFTIGSK (234 aa)). Glutamine 32 provides a ligand contact to S-methyl-5'-thioadenosine. Residues histidine 63 and aspartate 87 each coordinate spermidine. S-methyl-5'-thioadenosine-binding positions include aspartate 107 and 138–139 (DG). The Proton acceptor role is filled by aspartate 156. Residue 156-159 (DSTE) participates in spermidine binding. Proline 163 serves as a coordination point for S-methyl-5'-thioadenosine.

This sequence belongs to the spermidine/spermine synthase family. In terms of assembly, homodimer or homotetramer.

The protein resides in the cytoplasm. It carries out the reaction S-adenosyl 3-(methylsulfanyl)propylamine + putrescine = S-methyl-5'-thioadenosine + spermidine + H(+). The protein operates within amine and polyamine biosynthesis; spermidine biosynthesis; spermidine from putrescine: step 1/1. Its function is as follows. Involved in the cell growth and proliferation. Catalyzes the irreversible transfer of a propylamine group from the amino donor S-adenosylmethioninamine (decarboxy-AdoMet) to putrescine (1,4-diaminobutane) to yield spermidine. This chain is Polyamine aminopropyltransferase, found in Bacillus subtilis (strain 168).